The chain runs to 92 residues: Small ribosomal subunit protein uS19c (92 aa).

Belongs to the universal ribosomal protein uS19 family.

Its subcellular location is the plastid. The protein resides in the chloroplast. Functionally, protein S19 forms a complex with S13 that binds strongly to the 16S ribosomal RNA. The sequence is that of Small ribosomal subunit protein uS19c from Vitis vinifera (Grape).